A 327-amino-acid chain; its full sequence is Movement protein (327 aa).

Positions 297-327 (SASSSNTENELARVSQNIDLLKNKLKEICGE) form a coiled coil.

This sequence belongs to the caulimoviridae movement protein family. Homotrimer, through the coiled-coil domain. Interacts with VAP. May interact (via N-terminus) with host prenylated Rab acceptor protein 1D (PRA1D).

It localises to the host cell junction. Its subcellular location is the host plasmodesma. Transports viral genome to neighboring plant cells directly through plasmosdesmata, without any budding. The movement protein allows efficient cell to cell propagation, by bypassing the host cell wall barrier. Acts by forming tubules structures that increase the size exclusion limit (SEL) of plasmodesmata, thereby allowing viral ribonucleocapsids to spread directly to neighboring cells. This chain is Movement protein, found in Cauliflower mosaic virus (strain Strasbourg) (CaMV).